The sequence spans 71 residues: Conotoxin Ca5.1 (71 aa).

The signal sequence occupies residues 1–19 (MRCVPVFIILLLLASPAAS). Positions 20–56 (DPLEKRIQSDLIRAALEDADTKNDPRILEDIVSTALA) are excised as a propeptide.

Belongs to the conotoxin T superfamily. Contains 2 disulfide bonds that can be either 'C1-C3, C2-C4' or 'C1-C4, C2-C3', since these disulfide connectivities have been observed for conotoxins with cysteine framework V (for examples, see AC P0DQQ7 and AC P81755). In terms of tissue distribution, expressed by the venom duct.

The protein localises to the secreted. The sequence is that of Conotoxin Ca5.1 from Conus caracteristicus (Characteristic cone).